The chain runs to 384 residues: MAP kinase-activated protein kinase 3 (384 aa).

At M1 the chain carries N-acetylmethionine. The interval 1-22 (MDVETAEEQGGPAPPSGVPCGP) is disordered. Residues 46–306 (QLSKQVLGLG…ITQFMNHPWI (261 aa)) form the Protein kinase domain. ATP contacts are provided by residues 52 to 60 (LGLGVNGKV) and K75. Catalysis depends on D168, which acts as the Proton acceptor. T203 bears the Phosphothreonine; by MAPK14 mark. S253 carries the post-translational modification Phosphoserine; by MAPK14. Residue S309 is modified to Phosphoserine; by autocatalysis. The interval 309-345 (SMVVPQTPLHTARVLQEDRDHWDEVKEEMTSALATMR) is autoinhibitory helix. Phosphothreonine; by MAPK14 is present on T315. Positions 337-346 (MTSALATMRV) match the Nuclear export signal (NES) motif. Residues 347–371 (DYDQVKIKDLKTSNNRLLNKRRKKQ) are p38 MAPK-binding site. Short sequence motifs (bipartite nuclear localization signal) lie at residues 352 to 355 (KIKD) and 366 to 370 (KRRKK). Residues 359 to 384 (SNNRLLNKRRKKQAGSSSGSQGCNNQ) form a disordered region. Over residues 373 to 384 (GSSSGSQGCNNQ) the composition is skewed to low complexity.

The protein belongs to the protein kinase superfamily. CAMK Ser/Thr protein kinase family. In terms of assembly, heterodimer with p38-alpha/MAPK14. The heterodimer with p38-alpha/MAPK14 forms a stable complex: molecules are positioned 'face to face' so that the ATP-binding sites of both kinases are at the heterodimer interface. Interacts with TCF3 and with polycomb proteins, such as PCH2 and BMI1/PCGF4. In terms of processing, phosphorylated and activated by MAPK1/ERK2 and MAPK3/ERK1. Phosphorylated and activated by MAP kinase p38-alpha/MAPK14 at Thr-203, Ser-253 and Thr-315.

The protein resides in the nucleus. The protein localises to the cytoplasm. It catalyses the reaction L-seryl-[protein] + ATP = O-phospho-L-seryl-[protein] + ADP + H(+). The catalysed reaction is L-threonyl-[protein] + ATP = O-phospho-L-threonyl-[protein] + ADP + H(+). Activated following phosphorylation by p38-alpha/MAPK14 following various stresses. Inhibited by ligand 5B (2'-[2-(1,3-benzodioxol-5-yl)pyrimidin-4-yl]-5',6'-dihydrospiro[piperidine-4,7'-pyrrolo[3,2-c]pyridin]- 4'(1'h)-one) and ligand P4O (2-[2-(2-fluorophenyl)pyridin-4-yl]-1,5,6,7-tetrahydro- 4h-pyrrolo[3,2-c]pyridin-4-one), 2 ATP-competitive inhibitors. In terms of biological role, stress-activated serine/threonine-protein kinase involved in cytokines production, endocytosis, cell migration, chromatin remodeling and transcriptional regulation. Following stress, it is phosphorylated and activated by MAP kinase p38-alpha/MAPK14, leading to phosphorylation of substrates. Phosphorylates serine in the peptide sequence, Hyd-X-R-X(2)-S, where Hyd is a large hydrophobic residue. MAPKAPK2 and MAPKAPK3, share the same function and substrate specificity, but MAPKAPK3 kinase activity and level in protein expression are lower compared to MAPKAPK2. Phosphorylates HSP27/HSPB1, KRT18, KRT20, RCSD1, RPS6KA3, TAB3 and TTP/ZFP36. Mediates phosphorylation of HSP27/HSPB1 in response to stress, leading to dissociate HSP27/HSPB1 from large small heat-shock protein (sHsps) oligomers and impair their chaperone activities and ability to protect against oxidative stress effectively. Involved in inflammatory response by regulating tumor necrosis factor (TNF) and IL6 production post-transcriptionally: acts by phosphorylating AU-rich elements (AREs)-binding proteins, such as TTP/ZFP36, leading to regulate the stability and translation of TNF and IL6 mRNAs. Phosphorylation of TTP/ZFP36, a major post-transcriptional regulator of TNF, promotes its binding to 14-3-3 proteins and reduces its ARE mRNA affinity leading to inhibition of dependent degradation of ARE-containing transcript. Involved in toll-like receptor signaling pathway (TLR) in dendritic cells: required for acute TLR-induced macropinocytosis by phosphorylating and activating RPS6KA3. Also acts as a modulator of Polycomb-mediated repression. This chain is MAP kinase-activated protein kinase 3 (MAPKAPK3), found in Bos taurus (Bovine).